A 750-amino-acid polypeptide reads, in one-letter code: Photosystem I P700 chlorophyll a apoprotein A1 (750 aa).

8 helical membrane passes run Val-70–Ala-93, Leu-156–His-179, Leu-195–Leu-219, Ile-291–Tyr-309, Trp-346–Tyr-369, Leu-385–Val-411, Ala-433–His-455, and Phe-531–Leu-549. Residues Cys-573 and Cys-582 each coordinate [4Fe-4S] cluster. 2 helical membrane passes run His-589–Trp-610 and Leu-664–Phe-686. His-675 is a binding site for chlorophyll a'. Chlorophyll a is bound by residues Met-683 and Tyr-691. A phylloquinone-binding site is contributed by Trp-692. A helical membrane pass occupies residues Ala-724 to Ala-744.

The protein belongs to the PsaA/PsaB family. As to quaternary structure, the PsaA/B heterodimer binds the P700 chlorophyll special pair and subsequent electron acceptors. PSI consists of a core antenna complex that captures photons, and an electron transfer chain that converts photonic excitation into a charge separation. The eukaryotic PSI reaction center is composed of at least 11 subunits. It depends on P700 is a chlorophyll a/chlorophyll a' dimer, A0 is one or more chlorophyll a, A1 is one or both phylloquinones and FX is a shared 4Fe-4S iron-sulfur center. as a cofactor.

It localises to the plastid. The protein localises to the chloroplast thylakoid membrane. The enzyme catalyses reduced [plastocyanin] + hnu + oxidized [2Fe-2S]-[ferredoxin] = oxidized [plastocyanin] + reduced [2Fe-2S]-[ferredoxin]. PsaA and PsaB bind P700, the primary electron donor of photosystem I (PSI), as well as the electron acceptors A0, A1 and FX. PSI is a plastocyanin-ferredoxin oxidoreductase, converting photonic excitation into a charge separation, which transfers an electron from the donor P700 chlorophyll pair to the spectroscopically characterized acceptors A0, A1, FX, FA and FB in turn. Oxidized P700 is reduced on the lumenal side of the thylakoid membrane by plastocyanin. This chain is Photosystem I P700 chlorophyll a apoprotein A1, found in Saccharum hybrid (Sugarcane).